Reading from the N-terminus, the 103-residue chain is MSLGPWEIAIIVLLIIVLFGAKKLPDAARSIGRSMRIFKSEVKEMQKDDETPAQPEQQPQGYQHPQQIEAPQNLQQPNFQQHYQNQPQQPDYRQNYEDPNRTP.

The chain crosses the membrane as a helical span at residues 1-21; the sequence is MSLGPWEIAIIVLLIIVLFGA. The tract at residues 42-103 is disordered; sequence VKEMQKDDET…QNYEDPNRTP (62 aa). Low complexity predominate over residues 52-90; it reads PAQPEQQPQGYQHPQQIEAPQNLQQPNFQQHYQNQPQQP. The span at 94 to 103 shows a compositional bias: basic and acidic residues; sequence QNYEDPNRTP.

It belongs to the TatA/E family. As to quaternary structure, the Tat system comprises two distinct complexes: a TatABC complex, containing multiple copies of TatA, TatB and TatC subunits, and a separate TatA complex, containing only TatA subunits. Substrates initially bind to the TatABC complex, which probably triggers association of the separate TatA complex to form the active translocon.

It is found in the cell membrane. Its function is as follows. Part of the twin-arginine translocation (Tat) system that transports large folded proteins containing a characteristic twin-arginine motif in their signal peptide across membranes. TatA could form the protein-conducting channel of the Tat system. The polypeptide is Sec-independent protein translocase protein TatA (Corynebacterium efficiens (strain DSM 44549 / YS-314 / AJ 12310 / JCM 11189 / NBRC 100395)).